A 61-amino-acid chain; its full sequence is Metallothionein-1A (61 aa).

An N-acetylmethionine modification is found at M1. A beta region spans residues 1–29; that stretch reads MDPNCSCPTGGSCSCAGSCTCKACRCPSC. C5, C7, C13, C15, C19, C21, C24, C26, C29, C33, C34, C36, C37, C41, C44, C48, C50, and C57 together coordinate a divalent metal cation. Residues 30-61 are alpha; sequence KKSCCSCCPVGCAKCAQGCVCKGASDKCSCCA. S58 bears the Phosphoserine mark. 2 residues coordinate a divalent metal cation: C59 and C60.

Belongs to the metallothionein superfamily. Type 1 family. As to quaternary structure, monomer.

In terms of biological role, metallothioneins have a high content of cysteine residues that bind various heavy metals; these proteins are transcriptionally regulated by both heavy metals and glucocorticoids. The polypeptide is Metallothionein-1A (MT1A) (Bos taurus (Bovine)).